Consider the following 239-residue polypeptide: Probable phosphatase Csac_1188 (239 aa).

The Zn(2+) site is built by His8, His10, His16, His41, Glu74, His102, His132, Asp192, and His194.

The protein belongs to the PHP family. Zn(2+) is required as a cofactor.

The protein is Probable phosphatase Csac_1188 of Caldicellulosiruptor saccharolyticus (strain ATCC 43494 / DSM 8903 / Tp8T 6331).